A 442-amino-acid polypeptide reads, in one-letter code: Shufflon protein B (442 aa).

Positions 1–361 (MKKYDRGWAS…TGAILSCQSG (361 aa)) are constant region. A variable region region spans residues 362 to 442 (TWKSSSASIW…SYFMKITCLK (81 aa)).

This chain is Shufflon protein B, found in Escherichia coli.